Consider the following 494-residue polypeptide: Protein DETOXIFICATION 23 (494 aa).

The tract at residues 1–25 (MARREGEVTETLLKKSTENRGEDRD) is disordered. A run of 12 helical transmembrane segments spans residues 40-60 (LWVVAGPAIFTRFSTSGLSLI), 74-94 (AAYSITLTVLLRFSNGILLGM), 123-143 (IVLTGCTICLMPIYIFAGPIL), 158-178 (IIALWVIGINISFVPSFTCQM), 188-208 (IIAYVAAVSLGVHVFLSWLLV), 223-243 (LVAHWLPNIAQVLFVTCGGCT), 268-288 (GGMICLELWYNSILILLTGNL), 297-317 (ALAICININALEMMVAFGFMA), 340-360 (MVVVSTSLSIGIIFFFIFLFL), 384-404 (LLAFSILLNSIQPVLSGVAVG), 416-436 (LACYYLVGIPSGLFLGYVVGL), and 441-461 (VWLGMIFGIFVQTCVLTVMTM).

It belongs to the multi antimicrobial extrusion (MATE) (TC 2.A.66.1) family.

It localises to the membrane. In Arabidopsis thaliana (Mouse-ear cress), this protein is Protein DETOXIFICATION 23.